Here is a 252-residue protein sequence, read N- to C-terminus: tRNA pseudouridine synthase A (252 aa).

Asp-52 (nucleophile) is an active-site residue. Position 110 (Tyr-110) interacts with substrate.

Belongs to the tRNA pseudouridine synthase TruA family. In terms of assembly, homodimer.

The catalysed reaction is uridine(38/39/40) in tRNA = pseudouridine(38/39/40) in tRNA. Functionally, formation of pseudouridine at positions 38, 39 and 40 in the anticodon stem and loop of transfer RNAs. The protein is tRNA pseudouridine synthase A of Blochmanniella floridana.